We begin with the raw amino-acid sequence, 601 residues long: Elongation factor 4 (601 aa).

One can recognise a tr-type G domain in the interval 2-184; the sequence is DLIRNFSIIA…EMIARVPPPT (183 aa). Residues 14 to 19 and 131 to 134 contribute to the GTP site; these read DHGKST and NKID.

Belongs to the TRAFAC class translation factor GTPase superfamily. Classic translation factor GTPase family. LepA subfamily.

It is found in the cell inner membrane. It catalyses the reaction GTP + H2O = GDP + phosphate + H(+). Functionally, required for accurate and efficient protein synthesis under certain stress conditions. May act as a fidelity factor of the translation reaction, by catalyzing a one-codon backward translocation of tRNAs on improperly translocated ribosomes. Back-translocation proceeds from a post-translocation (POST) complex to a pre-translocation (PRE) complex, thus giving elongation factor G a second chance to translocate the tRNAs correctly. Binds to ribosomes in a GTP-dependent manner. This chain is Elongation factor 4, found in Polynucleobacter necessarius subsp. necessarius (strain STIR1).